The primary structure comprises 273 residues: Endochitinase EP3 (273 aa).

Positions 1 to 28 are cleaved as a signal peptide; sequence MLTPTISKSISLVTILLVLQAFSNTTKA. Asparagine 24 carries N-linked (GlcNAc...) asparagine glycosylation. Positions 29-63 constitute a Chitin-binding type-1 domain; sequence QNCGCSSELCCSQFGFCGNTSDYCGVGCQQGPCFA. Disulfide bonds link cysteine 31–cysteine 39, cysteine 33–cysteine 45, cysteine 38–cysteine 52, and cysteine 56–cysteine 61. N-linked (GlcNAc...) asparagine glycosylation is present at asparagine 47. The catalytic stretch occupies residues 70-273; sequence VSVAEIVTQE…GVDPGNNLTC (204 aa). The active-site Proton donor is glutamate 136. N-linked (GlcNAc...) asparagine glycosylation is found at asparagine 157 and asparagine 270.

It belongs to the glycosyl hydrolase 19 family. Chitinase class I subfamily. Expressed in cells surrounding embryos, stems, seedlings, pollen, roots, shoots, inflorescence, flowers, siliques and leaves. Present in seedpods and seed embryos, but not in roots, inflorescence stems, leaves and flowers.

It carries out the reaction Random endo-hydrolysis of N-acetyl-beta-D-glucosaminide (1-&gt;4)-beta-linkages in chitin and chitodextrins.. Functionally, probably involved in hypersensitive reaction upon Xanthomonas campestris infection. In Arabidopsis thaliana (Mouse-ear cress), this protein is Endochitinase EP3.